The primary structure comprises 363 residues: Flagellar P-ring protein 2 (363 aa).

The signal sequence occupies residues 1-20 (MKLRTCCISLMLLLALPLQA).

Belongs to the FlgI family. The basal body constitutes a major portion of the flagellar organelle and consists of four rings (L,P,S, and M) mounted on a central rod.

Its subcellular location is the periplasm. The protein localises to the bacterial flagellum basal body. Assembles around the rod to form the L-ring and probably protects the motor/basal body from shearing forces during rotation. This chain is Flagellar P-ring protein 2, found in Photobacterium profundum (strain SS9).